The sequence spans 395 residues: Lipid-A-disaccharide synthase (395 aa).

Belongs to the LpxB family.

The catalysed reaction is a lipid X + a UDP-2-N,3-O-bis[(3R)-3-hydroxyacyl]-alpha-D-glucosamine = a lipid A disaccharide + UDP + H(+). The protein operates within bacterial outer membrane biogenesis; LPS lipid A biosynthesis. Functionally, condensation of UDP-2,3-diacylglucosamine and 2,3-diacylglucosamine-1-phosphate to form lipid A disaccharide, a precursor of lipid A, a phosphorylated glycolipid that anchors the lipopolysaccharide to the outer membrane of the cell. This chain is Lipid-A-disaccharide synthase, found in Bordetella avium (strain 197N).